A 280-amino-acid chain; its full sequence is 2-dehydro-3-deoxyphosphooctonate aldolase (280 aa).

It belongs to the KdsA family.

Its subcellular location is the cytoplasm. The enzyme catalyses D-arabinose 5-phosphate + phosphoenolpyruvate + H2O = 3-deoxy-alpha-D-manno-2-octulosonate-8-phosphate + phosphate. Its pathway is carbohydrate biosynthesis; 3-deoxy-D-manno-octulosonate biosynthesis; 3-deoxy-D-manno-octulosonate from D-ribulose 5-phosphate: step 2/3. It functions in the pathway bacterial outer membrane biogenesis; lipopolysaccharide biosynthesis. This chain is 2-dehydro-3-deoxyphosphooctonate aldolase, found in Desulfotalea psychrophila (strain LSv54 / DSM 12343).